We begin with the raw amino-acid sequence, 365 residues long: Protein-glutamate methylesterase/protein-glutamine glutaminase 2 (365 aa).

One can recognise a Response regulatory domain in the interval 18–135 (RVLIVDDSAM…GQGLPAIMRD (118 aa)). The residue at position 69 (aspartate 69) is a 4-aspartylphosphate. The CheB-type methylesterase domain maps to 162–355 (GASEDWIHAL…ARMMLAAAAD (194 aa)). Residues serine 174, histidine 200, and aspartate 297 contribute to the active site.

The protein belongs to the CheB family. Phosphorylated by CheA. Phosphorylation of the N-terminal regulatory domain activates the methylesterase activity.

Its subcellular location is the cytoplasm. It carries out the reaction [protein]-L-glutamate 5-O-methyl ester + H2O = L-glutamyl-[protein] + methanol + H(+). The catalysed reaction is L-glutaminyl-[protein] + H2O = L-glutamyl-[protein] + NH4(+). Its function is as follows. Involved in chemotaxis. Part of a chemotaxis signal transduction system that modulates chemotaxis in response to various stimuli. Catalyzes the demethylation of specific methylglutamate residues introduced into the chemoreceptors (methyl-accepting chemotaxis proteins or MCP) by CheR. Also mediates the irreversible deamidation of specific glutamine residues to glutamic acid. This chain is Protein-glutamate methylesterase/protein-glutamine glutaminase 2, found in Cereibacter sphaeroides (strain ATCC 17023 / DSM 158 / JCM 6121 / CCUG 31486 / LMG 2827 / NBRC 12203 / NCIMB 8253 / ATH 2.4.1.) (Rhodobacter sphaeroides).